Here is a 319-residue protein sequence, read N- to C-terminus: Pantothenate kinase (319 aa).

Residue 96-103 (GSVAVGKS) participates in ATP binding.

This sequence belongs to the prokaryotic pantothenate kinase family.

It is found in the cytoplasm. The enzyme catalyses (R)-pantothenate + ATP = (R)-4'-phosphopantothenate + ADP + H(+). It functions in the pathway cofactor biosynthesis; coenzyme A biosynthesis; CoA from (R)-pantothenate: step 1/5. The protein is Pantothenate kinase (coaA) of Bacillus subtilis (strain 168).